Here is a 155-residue protein sequence, read N- to C-terminus: S-ribosylhomocysteine lyase (155 aa).

3 residues coordinate Fe cation: His57, His61, and Cys124.

This sequence belongs to the LuxS family. As to quaternary structure, homodimer. Fe cation serves as cofactor.

The catalysed reaction is S-(5-deoxy-D-ribos-5-yl)-L-homocysteine = (S)-4,5-dihydroxypentane-2,3-dione + L-homocysteine. In terms of biological role, involved in the synthesis of autoinducer 2 (AI-2) which is secreted by bacteria and is used to communicate both the cell density and the metabolic potential of the environment. The regulation of gene expression in response to changes in cell density is called quorum sensing. Catalyzes the transformation of S-ribosylhomocysteine (RHC) to homocysteine (HC) and 4,5-dihydroxy-2,3-pentadione (DPD). In Listeria monocytogenes serotype 4b (strain CLIP80459), this protein is S-ribosylhomocysteine lyase.